The primary structure comprises 191 residues: uncharacterized protein (191 aa).

This is an uncharacterized protein from Treponema pallidum (strain Nichols).